Here is a 214-residue protein sequence, read N- to C-terminus: Threonylcarbamoyl-AMP synthase (214 aa).

In terms of domain architecture, YrdC-like spans 9–214; sequence TDSVIQAAHW…GDALTGQIIR (206 aa).

Belongs to the SUA5 family. TsaC subfamily.

Its subcellular location is the cytoplasm. The enzyme catalyses L-threonine + hydrogencarbonate + ATP = L-threonylcarbamoyladenylate + diphosphate + H2O. In terms of biological role, required for the formation of a threonylcarbamoyl group on adenosine at position 37 (t(6)A37) in tRNAs that read codons beginning with adenine. Catalyzes the conversion of L-threonine, HCO(3)(-)/CO(2) and ATP to give threonylcarbamoyl-AMP (TC-AMP) as the acyladenylate intermediate, with the release of diphosphate. This Psychrobacter arcticus (strain DSM 17307 / VKM B-2377 / 273-4) protein is Threonylcarbamoyl-AMP synthase.